Consider the following 192-residue polypeptide: Pyridoxal 5'-phosphate synthase subunit PdxT (192 aa).

Residue 46–48 (GES) coordinates L-glutamine. Cysteine 75 functions as the Nucleophile in the catalytic mechanism. L-glutamine-binding positions include arginine 101 and 129–130 (IR). Residues histidine 166 and glutamate 168 each act as charge relay system in the active site.

This sequence belongs to the glutaminase PdxT/SNO family. In the presence of PdxS, forms a dodecamer of heterodimers. Only shows activity in the heterodimer.

It carries out the reaction aldehydo-D-ribose 5-phosphate + D-glyceraldehyde 3-phosphate + L-glutamine = pyridoxal 5'-phosphate + L-glutamate + phosphate + 3 H2O + H(+). The enzyme catalyses L-glutamine + H2O = L-glutamate + NH4(+). Its pathway is cofactor biosynthesis; pyridoxal 5'-phosphate biosynthesis. In terms of biological role, catalyzes the hydrolysis of glutamine to glutamate and ammonia as part of the biosynthesis of pyridoxal 5'-phosphate. The resulting ammonia molecule is channeled to the active site of PdxS. The chain is Pyridoxal 5'-phosphate synthase subunit PdxT from Staphylococcus carnosus (strain TM300).